The following is a 395-amino-acid chain: Acetate kinase (395 aa).

Asn-8 is a Mg(2+) binding site. Residue Lys-15 coordinates ATP. Arg-94 provides a ligand contact to substrate. Asp-151 functions as the Proton donor/acceptor in the catalytic mechanism. ATP is bound by residues 210–214 (HLGNG), 284–286 (DMR), and 329–333 (GIGEN). Position 382 (Glu-382) interacts with Mg(2+).

Belongs to the acetokinase family. As to quaternary structure, homodimer. It depends on Mg(2+) as a cofactor. Mn(2+) is required as a cofactor.

It is found in the cytoplasm. It carries out the reaction acetate + ATP = acetyl phosphate + ADP. The protein operates within metabolic intermediate biosynthesis; acetyl-CoA biosynthesis; acetyl-CoA from acetate: step 1/2. Catalyzes the formation of acetyl phosphate from acetate and ATP. Can also catalyze the reverse reaction. The sequence is that of Acetate kinase from Protochlamydia amoebophila (strain UWE25).